We begin with the raw amino-acid sequence, 117 residues long: Large ribosomal subunit protein bL17 (117 aa).

The protein belongs to the bacterial ribosomal protein bL17 family. As to quaternary structure, part of the 50S ribosomal subunit. Contacts protein L32.

In Neorickettsia sennetsu (strain ATCC VR-367 / Miyayama) (Ehrlichia sennetsu), this protein is Large ribosomal subunit protein bL17.